Consider the following 234-residue polypeptide: UDP-2,3-diacylglucosamine hydrolase (234 aa).

Asp-9, His-11, Asp-42, Asn-80, and His-115 together coordinate Mn(2+). 80-81 (NR) lines the substrate pocket. Substrate contacts are provided by Asp-123, Ser-161, Lys-165, Lys-168, and His-196. 2 residues coordinate Mn(2+): His-196 and His-198.

This sequence belongs to the LpxH family. It depends on Mn(2+) as a cofactor.

It localises to the cell inner membrane. The catalysed reaction is UDP-2-N,3-O-bis[(3R)-3-hydroxytetradecanoyl]-alpha-D-glucosamine + H2O = 2-N,3-O-bis[(3R)-3-hydroxytetradecanoyl]-alpha-D-glucosaminyl 1-phosphate + UMP + 2 H(+). It functions in the pathway glycolipid biosynthesis; lipid IV(A) biosynthesis; lipid IV(A) from (3R)-3-hydroxytetradecanoyl-[acyl-carrier-protein] and UDP-N-acetyl-alpha-D-glucosamine: step 4/6. In terms of biological role, hydrolyzes the pyrophosphate bond of UDP-2,3-diacylglucosamine to yield 2,3-diacylglucosamine 1-phosphate (lipid X) and UMP by catalyzing the attack of water at the alpha-P atom. Involved in the biosynthesis of lipid A, a phosphorylated glycolipid that anchors the lipopolysaccharide to the outer membrane of the cell. The polypeptide is UDP-2,3-diacylglucosamine hydrolase (Histophilus somni (strain 2336) (Haemophilus somnus)).